Consider the following 784-residue polypeptide: Endonuclease MutS2 (784 aa).

Gly-335–Thr-342 serves as a coordination point for ATP. Positions Leu-709–Lys-784 constitute a Smr domain.

It belongs to the DNA mismatch repair MutS family. MutS2 subfamily. As to quaternary structure, homodimer. Binds to stalled ribosomes, contacting rRNA.

Its function is as follows. Endonuclease that is involved in the suppression of homologous recombination and thus may have a key role in the control of bacterial genetic diversity. Functionally, acts as a ribosome collision sensor, splitting the ribosome into its 2 subunits. Detects stalled/collided 70S ribosomes which it binds and splits by an ATP-hydrolysis driven conformational change. Acts upstream of the ribosome quality control system (RQC), a ribosome-associated complex that mediates the extraction of incompletely synthesized nascent chains from stalled ribosomes and their subsequent degradation. Probably generates substrates for RQC. The chain is Endonuclease MutS2 from Geobacillus kaustophilus (strain HTA426).